The sequence spans 231 residues: Ribosyldihydronicotinamide dehydrogenase [quinone] (231 aa).

FAD-binding positions include histidine 12 and phenylalanine 18–serine 21. Serine 80 bears the Phosphoserine mark. Residue leucine 104 to phenylalanine 107 participates in FAD binding. Phenylalanine 127 to isoleucine 129 contacts substrate. FAD contacts are provided by residues threonine 148 to glycine 151 and tyrosine 156. The Zn(2+) site is built by histidine 174 and histidine 178. Glutamate 194 contributes to the FAD binding site. Position 197 is a phosphoserine (serine 197). Arginine 201 is a binding site for FAD. Position 223 (cysteine 223) interacts with Zn(2+).

The protein belongs to the NAD(P)H dehydrogenase (quinone) family. In terms of assembly, homodimer. The cofactor is Zn(2+). It depends on FAD as a cofactor.

The protein localises to the cytoplasm. It carries out the reaction 1-(beta-D-ribofuranosyl)-1,4-dihydronicotinamide + a quinone + H(+) = beta-nicotinamide D-riboside + a quinol. Inhibited by melatonin, resveratrol and 5-hydroxytryptamine. In terms of biological role, the enzyme apparently serves as a quinone reductase in connection with conjugation reactions of hydroquinones involved in detoxification pathways as well as in biosynthetic processes such as the vitamin K-dependent gamma-carboxylation of glutamate residues in prothrombin synthesis. The polypeptide is Ribosyldihydronicotinamide dehydrogenase [quinone] (NQO2) (Homo sapiens (Human)).